We begin with the raw amino-acid sequence, 865 residues long: Bifunctional uridylyltransferase/uridylyl-removing enzyme (865 aa).

Positions 1–318 (MPHVDLNPLK…FPRPDSDARL (318 aa)) are uridylyltransferase. Residues 319–675 (IDDDFRNLRE…VRPTEHGEGL (357 aa)) form a uridylyl-removing region. An HD domain is found at 437–559 (VDQHTLAVVR…VGDERRLAAL (123 aa)). 2 ACT domains span residues 676–762 (QVMV…RLPH) and 789–865 (RLSV…QQAA). The segment at 747 to 767 (DPHAARHAHAPRRLPHSHARR) is disordered. Over residues 751–767 (ARHAHAPRRLPHSHARR) the composition is skewed to basic residues.

It belongs to the GlnD family. Requires Mg(2+) as cofactor.

It carries out the reaction [protein-PII]-L-tyrosine + UTP = [protein-PII]-uridylyl-L-tyrosine + diphosphate. The enzyme catalyses [protein-PII]-uridylyl-L-tyrosine + H2O = [protein-PII]-L-tyrosine + UMP + H(+). Uridylyltransferase (UTase) activity is inhibited by glutamine, while glutamine activates uridylyl-removing (UR) activity. Its function is as follows. Modifies, by uridylylation and deuridylylation, the PII regulatory proteins (GlnB and homologs), in response to the nitrogen status of the cell that GlnD senses through the glutamine level. Under low glutamine levels, catalyzes the conversion of the PII proteins and UTP to PII-UMP and PPi, while under higher glutamine levels, GlnD hydrolyzes PII-UMP to PII and UMP (deuridylylation). Thus, controls uridylylation state and activity of the PII proteins, and plays an important role in the regulation of nitrogen assimilation and metabolism. The polypeptide is Bifunctional uridylyltransferase/uridylyl-removing enzyme (Bordetella pertussis (strain Tohama I / ATCC BAA-589 / NCTC 13251)).